A 510-amino-acid chain; its full sequence is Dolichyl-P-Man:Man5GlcNAc2-PP-dolichol alpha-1,3-mannosyltransferase Alg3 (510 aa).

At 1–43 the chain is on the cytoplasmic side; it reads MAPPKAASHRPAVRRKKSGTLVDSILDKYLNVRFFKYLLLEPA. The chain crosses the membrane as a helical span at residues 44–64; sequence ALPIVGLFVLLAELVINVVVI. At 65 to 97 the chain is on the lumenal side; the sequence is QRVPYTEIDWVAYMQECEGFLNGTTNYSLLRGD. The helical transmembrane segment at 98–118 threads the bilayer; it reads TGPLVYPAAFVYIYSALYYVT. Topologically, residues 119-125 are cytoplasmic; that stretch reads SHGTNVR. A helical membrane pass occupies residues 126–146; it reads LAQYIFAGIYLLQLALVLRLY. The Lumenal segment spans residues 147–171; it reads SKSRKVPPYVLVLSAFTSYRIHSIY. The helical transmembrane segment at 172 to 192 threads the bilayer; sequence VLRLFNDPVAVLLLYAALNLF. The Cytoplasmic segment spans residues 193–211; sequence LDRRWTLGSTFFSLAVGVK. A helical transmembrane segment spans residues 212–232; that stretch reads MNILLFAPALLLFYLANLGLL. A topological domain (lumenal) is located at residue arginine 233. The helical transmembrane segment at 234-254 threads the bilayer; the sequence is TILQLAVCGVIQLLLGAPFLL. The Cytoplasmic segment spans residues 255–294; sequence THPVEYLRGSFDLGRIFEHKWTVNYRFLSRDVFENRTFHV. Residues 295 to 315 traverse the membrane as a helical segment; that stretch reads SLLGLHLLLLLAFAKPIWTFF. Topologically, residues 316–403 are lumenal; it reads QSYVRLRRIE…YGIHFDRCTQ (88 aa). Residues 337 to 358 form a disordered region; sequence LQLKAQKRPKKVEKDKDKDQKK. A compositionally biased stretch (basic and acidic residues) spans 348-358; sequence VEKDKDKDQKK. A helical transmembrane segment spans residues 404–424; the sequence is LALLPFFLCNLVGVACSRSLH. Residues 425–426 lie on the Cytoplasmic side of the membrane; the sequence is YQ. A helical membrane pass occupies residues 427-447; the sequence is FYVWYFHSLPYLAWSTPYSLG. The Lumenal portion of the chain corresponds to 448–464; it reads VRCLILGLIEYCWNTYP. A helical membrane pass occupies residues 465–485; that stretch reads STNFSSAALHFTHIILLAGVA. At 486–510 the chain is on the cytoplasmic side; the sequence is KQLIQTMRINNAAKREQQEQQKKLQ.

It belongs to the glycosyltransferase ALG3 family.

It is found in the endoplasmic reticulum membrane. The catalysed reaction is an alpha-D-Man-(1-&gt;2)-alpha-D-Man-(1-&gt;2)-alpha-D-Man-(1-&gt;3)-[alpha-D-Man-(1-&gt;6)]-beta-D-Man-(1-&gt;4)-beta-D-GlcNAc-(1-&gt;4)-alpha-D-GlcNAc-diphospho-di-trans,poly-cis-dolichol + a di-trans,poly-cis-dolichyl beta-D-mannosyl phosphate = an alpha-D-Man-(1-&gt;2)-alpha-D-Man-(1-&gt;2)-alpha-D-Man-(1-&gt;3)-[alpha-D-Man-(1-&gt;3)-alpha-D-Man-(1-&gt;6)]-beta-D-Man-(1-&gt;4)-beta-D-GlcNAc-(1-&gt;4)-alpha-D-GlcNAc-diphospho-di-trans,poly-cis-dolichol + a di-trans,poly-cis-dolichyl phosphate + H(+). It functions in the pathway protein modification; protein glycosylation. Its function is as follows. Probable alpha-1,3-mannosyltransferase involved in the N-glycosylation pathway. Involved in glycosylation of the TNF receptor grnd, regulating its ligand affinity. Required for normal epithelial growth and architecture. Suppressor of JNK-dependent intestinal stem cell proliferation. The sequence is that of Dolichyl-P-Man:Man5GlcNAc2-PP-dolichol alpha-1,3-mannosyltransferase Alg3 from Drosophila melanogaster (Fruit fly).